Here is a 1349-residue protein sequence, read N- to C-terminus: Adhesion G protein-coupled receptor F5 (1349 aa).

Residues 1 to 24 form the signal peptide; it reads MKSSRTVTLYFVLIVICSSEATWS. At 25–1016 the chain is on the extracellular side; sequence RPAEPIVHPL…PGSLLKILLD (992 aa). N-linked (GlcNAc...) asparagine glycosylation is found at asparagine 73, asparagine 94, asparagine 185, asparagine 254, asparagine 270, asparagine 286, asparagine 299, asparagine 326, asparagine 337, asparagine 349, asparagine 396, asparagine 470, asparagine 503, asparagine 538, asparagine 649, and asparagine 666. In terms of domain architecture, SEA spans 163-271; sequence PETYITLKIK…NSFQGTPSNE (109 aa). Ig-like domains are found at residues 268–366, 367–464, and 469–559; these read PSNE…LDVT, PIRI…IAVT, and ANLT…KDVT. Cysteines 291 and 348 form a disulfide. Cysteine 389 and cysteine 447 are joined by a disulfide. Cysteine 490 and cysteine 543 are disulfide-bonded. Serine 819 bears the Phosphoserine mark. Asparagine 820, asparagine 958, and asparagine 963 each carry an N-linked (GlcNAc...) asparagine glycan. The region spanning 842–1006 is the GAIN-B domain; the sequence is TPPFLFHPNV…SILMSPDSPD (165 aa). 2 cysteine pairs are disulfide-bonded: cysteine 954/cysteine 988 and cysteine 973/cysteine 990. The segment at 954 to 1006 is GPS; it reads CVFWNFSLANNTGGWDSSGCTVEDDGRDNRDRVFCKCNHLTSFSILMSPDSPD. The interval 994–1009 is tethered agonist; sequence TSFSILMSPDSPDPGS. Residues 1017–1036 traverse the membrane as a helical segment; it reads IISYIGLGFSIVSLAACLVV. Over 1037–1055 the chain is Cytoplasmic; it reads EAMVWKSVTKNRTSYMRHI. A helical transmembrane segment spans residues 1056-1078; it reads CIVNIALCLLIADIWFIVAGAIH. Over 1079–1097 the chain is Extracellular; it reads DGHYPLNETACVAATFFIH. A glycan (N-linked (GlcNAc...) asparagine) is linked at asparagine 1085. A helical transmembrane segment spans residues 1098–1120; it reads FFYLSVFFWMLTLGLMLFYRLIF. The Cytoplasmic segment spans residues 1121-1131; that stretch reads ILHDASKSTQK. A helical transmembrane segment spans residues 1132 to 1154; that stretch reads AIAFSLGYGCPLIISSITVGVTQ. Residues 1155–1173 lie on the Extracellular side of the membrane; that stretch reads PQEVYMRKNACWLNWEDTR. Residues 1174 to 1196 traverse the membrane as a helical segment; sequence ALLAFAIPALIIVVVNVSITVVV. At 1197 to 1216 the chain is on the cytoplasmic side; sequence ITKILRPSVGDKPGKQEKSS. Residues 1217–1239 form a helical membrane-spanning segment; it reads LFQISKSIGVLTPLLGLTWGFGL. Residues 1240-1248 are Extracellular-facing; that stretch reads ATVIQGSNA. A helical transmembrane segment spans residues 1249-1271; that stretch reads VFHIIFTLLNAFQGLFILLFGCL. At 1272 to 1349 the chain is on the cytoplasmic side; it reads WDQKVQEALL…NSSSAYSLLN (78 aa). Position 1303 is a phosphothreonine (threonine 1303). At serine 1310 the chain carries Phosphoserine. The span at 1329–1343 shows a compositional bias: low complexity; sequence STPETTSSSVENSSS. The disordered stretch occupies residues 1329 to 1349; the sequence is STPETTSSSVENSSSAYSLLN.

It belongs to the G-protein coupled receptor 2 family. Adhesion G-protein coupled receptor (ADGR) subfamily. In terms of assembly, homodimer; disulfide-linked. Heterodimer of 2 chains generated by proteolytic processing; the large extracellular N-terminal fragment and the membrane-bound C-terminal fragment predominantly remain associated and non-covalently linked. Fragment generates by the processing enzyme furin remains attached to the extracellular N-terminal fragment. Interacts (via N-terminal extracellular domain) with SFTPD. Highly glycosylated. In terms of processing, proteolytically cleaved at multiple sites: one in the GPS region of the GAIN-B domain (S1 site) and the other in the SEA domain (S2 site). The proteolytic cleavage at S1 site generates an extracellular subunit and a seven-transmembrane subunit. The proteolytic cleavage at S2 site generates a fragment that undergoes proteolytic cleavage by the processing enzyme furin. As to expression, highly expressed in the lung and to a much lesser extent in the kidney and heart. Dense localization in alveolar walls of the lung and in the intercalated cells of the collecting duct of the kidney.

Its subcellular location is the cell membrane. With respect to regulation, as an adhesion G protein-coupled receptor (aGPCR) exhibits a large N-terminal extracellular domain containing highly conserved GPCR autoproteolysis-inducing (GAIN) domain. During synthesis, intracellular autoproteolytic processing of nascent chain within the GAIN domain generates a mature protein, consisting of an N-terminal fragment that is non-covalently linked to the C-terminal fragment. The mature protein is routed to the plasma membrane where the N- and C-terminal fragments remain associated, forming the holoreceptor. Dissociation of the aGPCR fragments stimulates G protein signaling through the action of the tethered-peptide agonist stalk that is occluded within the GAIN domain in the holoreceptor form. This dissociation might be induced by ligand binding, such as that of sFNDC4. In terms of biological role, receptor that plays a critical role in lung surfactant homeostasis. May play a role in controlling adipocyte function. Functionally, adhesion G protein-coupled receptor. In alveolar type II (ATII or AT2) cells, required for normal lung surfactant homeostasis. Modulation of both surfactant secretion and uptake by ATII cells is mediated by the downstream activation of GNAQ/GNA11 proteins and may be a consequence of increased cortical F-actin assembly induced by ADGRF5 activation. In the kidney, may play a role in the regulation of acid excretion into the primary urine, possibly by regulating the surface expression of V-ATPase proton pump. As a receptor for soluble FNDC4 (sFNDC4), required for proper systemic glucose tolerance, specifically sensitizing white adipose tissue to insulin. Also plays a role in sFNDC4-induced decrease of local inflammation in white adipose tissue. The chain is Adhesion G protein-coupled receptor F5 (Adgrf5) from Rattus norvegicus (Rat).